The chain runs to 764 residues: Tyrosine-protein phosphatase corkscrew (764 aa).

In terms of domain architecture, SH2 spans Trp1–Phe95. A Tyrosine-protein phosphatase domain is found at Phe117–Tyr522. Residues Ile174–Thr325 form a PTPase insert (Cys/Ser-rich) region. The segment at Ser246–Ala273 is disordered. Residues Ser255 to Ala273 show a composition bias toward low complexity. Substrate-binding positions include Asp422, Cys460 to Arg466, and Gln507. Cys460 serves as the catalytic Phosphocysteine intermediate. Positions Ala599–Gly666 are disordered. Residues Ser612–Gly666 show a composition bias toward low complexity.

The protein belongs to the protein-tyrosine phosphatase family. Non-receptor class subfamily.

The protein localises to the cytoplasm. It catalyses the reaction O-phospho-L-tyrosyl-[protein] + H2O = L-tyrosyl-[protein] + phosphate. Required in all receptor tyrosine kinase signaling pathways. Functions downstream of the receptor tyrosine kinase torso, acting in concert with D-Raf via tailless. Also functions downstream of Egfr (epidermal growth factor receptor) and btl (fibroblast growth factor receptor). The SH2 domain suggests that csw effects its role by mediating heteromeric protein interactions. Maternally required for normal determination of cell fates at the termini of the embryo. Required for cell fate specification of the ventral ectoderm, in the developing embryonic CNS and for embryonic tracheal cell migration. Functions during imaginal development for proper formation of adult structures such as eyes, aristae, L5 wing vein and the tarsal claw. The protein is Tyrosine-protein phosphatase corkscrew (csw) of Drosophila virilis (Fruit fly).